Here is a 452-residue protein sequence, read N- to C-terminus: UDP-N-acetylmuramoylalanine--D-glutamate ligase (452 aa).

115 to 121 serves as a coordination point for ATP; that stretch reads GTNGKTT.

It belongs to the MurCDEF family.

The protein localises to the cytoplasm. It catalyses the reaction UDP-N-acetyl-alpha-D-muramoyl-L-alanine + D-glutamate + ATP = UDP-N-acetyl-alpha-D-muramoyl-L-alanyl-D-glutamate + ADP + phosphate + H(+). Its pathway is cell wall biogenesis; peptidoglycan biosynthesis. Its function is as follows. Cell wall formation. Catalyzes the addition of glutamate to the nucleotide precursor UDP-N-acetylmuramoyl-L-alanine (UMA). The protein is UDP-N-acetylmuramoylalanine--D-glutamate ligase of Elusimicrobium minutum (strain Pei191).